The following is a 259-amino-acid chain: (3R)-3-hydroxyacyl-CoA dehydrogenase (259 aa).

NAD(+) contacts are provided by residues 13 to 21 and 40 to 41; these read LVTGAGSGI and DL. At Ser-58 the chain carries Phosphoserine. N6-acetyllysine is present on Lys-66. Residue 72-74 coordinates NAD(+); the sequence is ADV. A substrate-binding site is contributed by Ser-154. Lys-158 bears the N6-succinyllysine mark. Residue Tyr-167 is the Proton acceptor of the active site. NAD(+)-binding positions include 167-171 and 200-202; these read YASSK and IAT. The residue at position 171 (Lys-171) is an N6-succinyllysine.

It belongs to the short-chain dehydrogenases/reductases (SDR) family. As to quaternary structure, heterotetramer with CBR4; contains two molecules of HSD17B8 and CBR4. In terms of tissue distribution, expressed in ovary at protein level.

It is found in the mitochondrion matrix. It catalyses the reaction a (3R)-3-hydroxyacyl-CoA + NAD(+) = a 3-oxoacyl-CoA + NADH + H(+). The enzyme catalyses 17beta-estradiol + NAD(+) = estrone + NADH + H(+). The catalysed reaction is testosterone + NAD(+) = androst-4-ene-3,17-dione + NADH + H(+). It carries out the reaction 17beta-hydroxy-5alpha-androstan-3-one + NAD(+) = 5alpha-androstan-3,17-dione + NADH + H(+). The protein operates within steroid biosynthesis; estrogen biosynthesis. Its pathway is lipid metabolism; fatty acid biosynthesis. It participates in lipid metabolism; mitochondrial fatty acid beta-oxidation. Functionally, required for the solubility and assembly of the heterotetramer 3-ketoacyl-[acyl carrier protein] (ACP) reductase functional complex (KAR or KAR1) that forms part of the mitochondrial fatty acid synthase (mtFAS). Alpha-subunit of the KAR complex that acts as scaffold protein required for the stability of carbonyl reductase type-4 (CBR4, beta-subunit of the KAR complex) and for its 3-ketoacyl-ACP reductase activity, thereby participating in mitochondrial fatty acid biosynthesis. Catalyzes the NAD-dependent conversion of (3R)-3-hydroxyacyl-CoA into 3-ketoacyl-CoA (3-oxoacyl-CoA) with no chain length preference; this enzymatic activity is not needed for the KAR function. Prefers (3R)-3-hydroxyacyl-CoA over (3S)-3-hydroxyacyl-CoA and displays enzymatic activity only in the presence of NAD(+). Cooperates with enoyl-CoA hydratase 1 in mitochondria, together they constitute an alternative route to the auxiliary enzyme pathways for the breakdown of Z-PUFA (cis polyunsaturated fatty acid) enoyl-esters. NAD-dependent 17-beta-hydroxysteroid dehydrogenase with highest activity towards estradiol (17beta-estradiol or E2). Has very low activity towards testosterone and dihydrotestosterone (17beta-hydroxy-5alpha-androstan-3-one). Primarily an oxidative enzyme, it can switch to a reductive mode determined in the appropriate physiologic milieu and catalyze the reduction of estrone (E1) to form biologically active 17beta-estradiol. The protein is (3R)-3-hydroxyacyl-CoA dehydrogenase (Hsd17b8) of Rattus norvegicus (Rat).